We begin with the raw amino-acid sequence, 360 residues long: MRIFATEVQTINSFVRLESFKEVYGLIWEFLPIFSLVLGILTGVLVLVWLEREISARIQQRIGPEYAGALGILQALADGIKLLFKENLRPSIGNTTLFSIGPSIAVISILLSYSVIPFSNHLVLADFNIGIFLWIAISSIAPIGLLMSGYGSNNKYSFLGGLRAAAQSISYEIPLTLCLLSISLLSNSLSTVDIVEAQSKYGFWGWNLWRQPIGFIIFLISSLAECERLPFDLPEAEEELVAGYQTEYSGIKFGLFYVASYLNLLISSLFVTVLYLGGWNISIPYISILELFERDQIFGTTIGIFITLAKTYLFLFISITTRWTLPRLRIDQLLNFGWKFLLPISLGNLLLTTSFQVFSL.

8 consecutive transmembrane segments (helical) span residues 30–50, 98–118, 127–147, 165–185, 203–223, 248–268, 297–317, and 340–360; these read FLPIFSLVLGILTGVLVLVWL, FSIGPSIAVISILLSYSVIPF, FNIGIFLWIAISSIAPIGLLM, AAQSISYEIPLTLCLLSISLL, FWGWNLWRQPIGFIIFLISSL, YSGIKFGLFYVASYLNLLISS, IFGTTIGIFITLAKTYLFLFI, and FLLPISLGNLLLTTSFQVFSL.

Belongs to the complex I subunit 1 family. In terms of assembly, NDH is composed of at least 16 different subunits, 5 of which are encoded in the nucleus.

Its subcellular location is the plastid. The protein resides in the chloroplast thylakoid membrane. It carries out the reaction a plastoquinone + NADH + (n+1) H(+)(in) = a plastoquinol + NAD(+) + n H(+)(out). The enzyme catalyses a plastoquinone + NADPH + (n+1) H(+)(in) = a plastoquinol + NADP(+) + n H(+)(out). Functionally, NDH shuttles electrons from NAD(P)H:plastoquinone, via FMN and iron-sulfur (Fe-S) centers, to quinones in the photosynthetic chain and possibly in a chloroplast respiratory chain. The immediate electron acceptor for the enzyme in this species is believed to be plastoquinone. Couples the redox reaction to proton translocation, and thus conserves the redox energy in a proton gradient. This chain is NAD(P)H-quinone oxidoreductase subunit 1, chloroplastic, found in Aethionema grandiflorum (Persian stone-cress).